The sequence spans 4690 residues: Nonribosomal peptide synthetase sidN (4690 aa).

Positions 238–656 (ARVRENPGRI…LGRLSSDQIK (419 aa)) are adenylation 1. The Carrier 1 domain occupies 779-856 (SSSIPMLQSV…DLDTKAQQAL (78 aa)). S816 carries the O-(pantetheine 4'-phosphoryl)serine modification. The interval 924–1175 (APGGKAFIQH…AFGNTMSDRF (252 aa)) is condensation 1. Positions 1349 to 1760 (EFAQKSPNAI…GRKDDLVKIR (412 aa)) are adenylation 2. In terms of domain architecture, Carrier 2 spans 1889–1965 (PAWCIKHRPL…DLINHLSVKR (77 aa)). An O-(pantetheine 4'-phosphoryl)serine modification is found at S1926. The interval 2001–2285 (PTTVFQDGML…SERLLESQLV (285 aa)) is condensation 2. The tract at residues 2464–2869 (TWAKTHPEWK…GRKDEQVKVR (406 aa)) is adenylation 3. The Carrier 3 domain occupies 3002–3079 (RDLTSIEKQI…ELGRMKNALK (78 aa)). S3040 carries the post-translational modification O-(pantetheine 4'-phosphoryl)serine. Residues 3121-3530 (CMPLQEVLVA…QMESLVTSFT (410 aa)) are condensation 3. Residues 3564–3637 (SVLEQQIRDV…KLATHIQTTS (74 aa)) enclose the Carrier 4 domain. S3598 is modified (O-(pantetheine 4'-phosphoryl)serine). A condensation 4 region spans residues 3679-4087 (VYPLTPLQAG…FESIRKHPDE (409 aa)). The Carrier 5 domain maps to 4119 to 4195 (SAIDQFLDPL…KLCEVAFAKS (77 aa)). An O-(pantetheine 4'-phosphoryl)serine modification is found at S4156. The condensation 5 stretch occupies residues 4262 to 4589 (WVFKAENGLD…FNAHLNILWN (328 aa)).

Belongs to the NRP synthetase family.

The protein operates within siderophore biosynthesis. Functionally, nonribosomal peptide synthetase required for the biosynthetis of epichloenin A, an extracellular siderophore that plays a crucial role in endophyte-grass symbioses. SidN assembles epichloenin A by activating and incorporating three trans-anhydromevalonylhydroxyornithine (trans-AMHO), 1 glutamine and 4 glycine moieties. Trans-AMHO is produced from L-ornithine via 2 steps involving a L-ornithine N(5)-monooxygenase and an AHMO-N(5)-transacylase that have still to be identified. The third adenylation domain (A3) of sidN incorporates the hydroxamate groups of the siderophore which forms an octahedral iron complex. The other component amino acids are assembled by sidN adenylation domains A1 and A2. The sequence is that of Nonribosomal peptide synthetase sidN from Epichloe festucae (strain Fl1).